The primary structure comprises 283 residues: NAD kinase (283 aa).

D66 functions as the Proton acceptor in the catalytic mechanism. NAD(+)-binding positions include 66–67 (DG), 134–135 (ND), R145, R163, D165, and 176–181 (TAYSMS).

It belongs to the NAD kinase family. The cofactor is a divalent metal cation.

Its subcellular location is the cytoplasm. It catalyses the reaction NAD(+) + ATP = ADP + NADP(+) + H(+). Involved in the regulation of the intracellular balance of NAD and NADP, and is a key enzyme in the biosynthesis of NADP. Catalyzes specifically the phosphorylation on 2'-hydroxyl of the adenosine moiety of NAD to yield NADP. The protein is NAD kinase of Chlorobaculum tepidum (strain ATCC 49652 / DSM 12025 / NBRC 103806 / TLS) (Chlorobium tepidum).